The following is a 271-amino-acid chain: Ribonuclease 3 (271 aa).

Positions 5–139 (PALLELKLDY…IMAAIYLDGG (135 aa)) constitute an RNase III domain. Residue Glu52 coordinates Mg(2+). Residue Asp56 is part of the active site. The Mg(2+) site is built by Asp125 and Glu128. Glu128 is a catalytic residue. The 70-residue stretch at 172 to 241 (NFKSALQELA…ARGLYERLMG (70 aa)) folds into the DRBM domain. The tract at residues 241-271 (GDPIVPLPDDSPGDSPDDSGDAAESGVISAT) is disordered. Residues 251 to 261 (SPGDSPDDSGD) are compositionally biased toward acidic residues.

The protein belongs to the ribonuclease III family. Homodimer. Requires Mg(2+) as cofactor.

The protein resides in the cytoplasm. It catalyses the reaction Endonucleolytic cleavage to 5'-phosphomonoester.. In terms of biological role, digests double-stranded RNA. Involved in the processing of primary rRNA transcript to yield the immediate precursors to the large and small rRNAs (23S and 16S). Processes some mRNAs, and tRNAs when they are encoded in the rRNA operon. Processes pre-crRNA and tracrRNA of type II CRISPR loci if present in the organism. The chain is Ribonuclease 3 from Solibacter usitatus (strain Ellin6076).